Reading from the N-terminus, the 105-residue chain is Pyrimidine/purine nucleoside phosphorylase (105 aa).

The protein belongs to the nucleoside phosphorylase PpnP family.

The catalysed reaction is a purine D-ribonucleoside + phosphate = a purine nucleobase + alpha-D-ribose 1-phosphate. It catalyses the reaction adenosine + phosphate = alpha-D-ribose 1-phosphate + adenine. It carries out the reaction cytidine + phosphate = cytosine + alpha-D-ribose 1-phosphate. The enzyme catalyses guanosine + phosphate = alpha-D-ribose 1-phosphate + guanine. The catalysed reaction is inosine + phosphate = alpha-D-ribose 1-phosphate + hypoxanthine. It catalyses the reaction thymidine + phosphate = 2-deoxy-alpha-D-ribose 1-phosphate + thymine. It carries out the reaction uridine + phosphate = alpha-D-ribose 1-phosphate + uracil. The enzyme catalyses xanthosine + phosphate = alpha-D-ribose 1-phosphate + xanthine. Its function is as follows. Catalyzes the phosphorolysis of diverse nucleosides, yielding D-ribose 1-phosphate and the respective free bases. Can use uridine, adenosine, guanosine, cytidine, thymidine, inosine and xanthosine as substrates. Also catalyzes the reverse reactions. This chain is Pyrimidine/purine nucleoside phosphorylase, found in Anaeromyxobacter sp. (strain Fw109-5).